The sequence spans 768 residues: U-box domain-containing protein 45 (768 aa).

One can recognise a U-box domain in the interval 278–352; sequence VPPEELRCPI…SSWCEQNGVQ (75 aa). ARM repeat units follow at residues 454–497, 500–540, 542–579, 581–620, and 623–662; these read EEAR…NLAV, NRNK…CLEE, KPVI…HLST, PPNI…NLVL, and AGKD…ILCN.

As to quaternary structure, binds to SD129.

It carries out the reaction S-ubiquitinyl-[E2 ubiquitin-conjugating enzyme]-L-cysteine + [acceptor protein]-L-lysine = [E2 ubiquitin-conjugating enzyme]-L-cysteine + N(6)-ubiquitinyl-[acceptor protein]-L-lysine.. It participates in protein modification; protein ubiquitination. Functionally, functions as an E3 ubiquitin ligase. The chain is U-box domain-containing protein 45 (PUB45) from Arabidopsis thaliana (Mouse-ear cress).